A 1918-amino-acid chain; its full sequence is NFX1-type zinc finger-containing protein 1 (1918 aa).

Over residues 1-12 (MEERRPHLDARP) the composition is skewed to basic and acidic residues. Disordered stretches follow at residues 1-58 (MEER…RANN) and 75-140 (RNPH…QPQQ). The span at 30 to 42 (RARNQANNPPANA) shows a compositional bias: low complexity. Residues 82–105 (RNQEGHASDEARDQRHDQENDTRW) are compositionally biased toward basic and acidic residues. The segment covering 120-129 (SNDNFQQWRT) has biased composition (polar residues). Residues 286–313 (DIEEETEKNLEKVQTIIEHLQEKRREGT) adopt a coiled-coil conformation. Disordered regions lie at residues 796–819 (SVSPAGPENTAQAEGDEEEEGEEE) and 876–896 (TAAGQEQATGEWQTQRNQKKK). Over residues 809 to 819 (EGDEEEEGEEE) the composition is skewed to acidic residues. Residues 877–887 (AAGQEQATGEW) show a composition bias toward polar residues. Positions 886 to 967 (EWQTQRNQKK…TSAERMAELR (82 aa)) form a coiled coil. 6 consecutive NF-X1-type zinc fingers follow at residues 1298-1320 (CGHVCTRACHPYDSSHKEFQCMK), 1330-1346 (GHRCPLVCFQECQPCQV), 1382-1400 (CGHRCSHPCGEDCVQLCSE), 1441-1463 (CGHPCPGSCHSCFEGRFHERCQQ), 1471-1488 (CSHKCQEPCIGECPPCQR), and 1546-1564 (CGHPCIGLCGEPCPKKCRI). The stretch at 1741–1820 (LAKKRLSFTS…EKMEALKATL (80 aa)) forms a coiled coil. The segment at 1827–1898 (ISEEERVQIV…LASEMDGAQH (72 aa)) adopts an RZ-type zinc-finger fold. Residues C1849, H1853, C1869, and C1872 each contribute to the Zn(2+) site.

This sequence belongs to the ZNFX1 family. Interacts with MAVS. As to expression, widely expressed.

It localises to the mitochondrion outer membrane. It is found in the cytoplasm. The protein resides in the stress granule. RNA-binding protein that initiates the antiviral response and is required to restrict the replication of RNA viruses. Acts as a double-stranded RNA (dsRNA) sensor that recognizes viral RNA and then interacts with MAVS to initiate the type I interferon response. Also required for immunity against some bacteria, such as mycobacteria. The chain is NFX1-type zinc finger-containing protein 1 from Homo sapiens (Human).